An 842-amino-acid chain; its full sequence is Glucans biosynthesis glucosyltransferase H (842 aa).

8 consecutive transmembrane segments (helical) span residues isoleucine 140 to leucine 160, isoleucine 194 to methionine 214, valine 513 to leucine 533, isoleucine 568 to leucine 588, phenylalanine 600 to valine 620, methionine 622 to serine 642, phenylalanine 656 to leucine 676, and phenylalanine 680 to isoleucine 700.

It belongs to the glycosyltransferase 2 family. OpgH subfamily.

It is found in the cell inner membrane. The protein operates within glycan metabolism; osmoregulated periplasmic glucan (OPG) biosynthesis. Its function is as follows. Involved in the biosynthesis of osmoregulated periplasmic glucans (OPGs). This is Glucans biosynthesis glucosyltransferase H from Klebsiella pneumoniae (strain 342).